The following is a 144-amino-acid chain: Large ribosomal subunit protein uL15 (144 aa).

A disordered region spans residues 1 to 58 (MHLNTLSPAPGSHKARKRCGRGIGSGIGKTGGRGHKGQKSRSGGSVRPGFEGGQMPLK). Gly residues predominate over residues 21 to 31 (RGIGSGIGKTG).

The protein belongs to the universal ribosomal protein uL15 family. Part of the 50S ribosomal subunit.

Its function is as follows. Binds to the 23S rRNA. This chain is Large ribosomal subunit protein uL15, found in Colwellia psychrerythraea (strain 34H / ATCC BAA-681) (Vibrio psychroerythus).